Consider the following 218-residue polypeptide: Ribosomal RNA small subunit methyltransferase G (218 aa).

S-adenosyl-L-methionine-binding positions include G82, L87, 137–138, and R152; that span reads VE.

Belongs to the methyltransferase superfamily. RNA methyltransferase RsmG family.

The protein localises to the cytoplasm. It carries out the reaction guanosine(527) in 16S rRNA + S-adenosyl-L-methionine = N(7)-methylguanosine(527) in 16S rRNA + S-adenosyl-L-homocysteine. Its function is as follows. Specifically methylates the N7 position of guanine in position 527 of 16S rRNA. This Herminiimonas arsenicoxydans protein is Ribosomal RNA small subunit methyltransferase G.